A 316-amino-acid chain; its full sequence is Pantothenate kinase (316 aa).

95–102 provides a ligand contact to ATP; the sequence is GSVAVGKS.

The protein belongs to the prokaryotic pantothenate kinase family.

Its subcellular location is the cytoplasm. The catalysed reaction is (R)-pantothenate + ATP = (R)-4'-phosphopantothenate + ADP + H(+). It functions in the pathway cofactor biosynthesis; coenzyme A biosynthesis; CoA from (R)-pantothenate: step 1/5. The polypeptide is Pantothenate kinase (Hamiltonella defensa subsp. Acyrthosiphon pisum (strain 5AT)).